Reading from the N-terminus, the 56-residue chain is U4-myrmicitoxin-Tb1a (56 aa).

Residues M1–A26 form the signal peptide. A propeptide spanning residues K27–A40 is cleaved from the precursor. At G53 the chain carries Glycine amide.

In terms of processing, contains 1 disulfide bond. In terms of tissue distribution, expressed by the venom gland.

The protein localises to the secreted. In terms of biological role, venom protein with unknown function. Does not induce paralysis when a high dose is administered by intrathoracic injection into the blowfly Lucilia caesar. This chain is U4-myrmicitoxin-Tb1a, found in Tetramorium bicarinatum (Tramp ant).